We begin with the raw amino-acid sequence, 167 residues long: Translation initiation factor IF-3 (167 aa).

This sequence belongs to the IF-3 family. As to quaternary structure, monomer.

The protein localises to the cytoplasm. Functionally, IF-3 binds to the 30S ribosomal subunit and shifts the equilibrium between 70S ribosomes and their 50S and 30S subunits in favor of the free subunits, thus enhancing the availability of 30S subunits on which protein synthesis initiation begins. The protein is Translation initiation factor IF-3 of Bacillus cereus (strain ATCC 14579 / DSM 31 / CCUG 7414 / JCM 2152 / NBRC 15305 / NCIMB 9373 / NCTC 2599 / NRRL B-3711).